A 386-amino-acid chain; its full sequence is Methionyl-tRNA formyltransferase, mitochondrial (386 aa).

This sequence belongs to the Fmt family.

The protein localises to the mitochondrion. The enzyme catalyses L-methionyl-tRNA(fMet) + (6R)-10-formyltetrahydrofolate = N-formyl-L-methionyl-tRNA(fMet) + (6S)-5,6,7,8-tetrahydrofolate + H(+). In terms of biological role, methionyl-tRNA formyltransferase that formylates methionyl-tRNA in mitochondria and is crucial for translation initiation. This Mus musculus (Mouse) protein is Methionyl-tRNA formyltransferase, mitochondrial (Mtfmt).